A 314-amino-acid chain; its full sequence is 4-hydroxy-3-methylbut-2-enyl diphosphate reductase (314 aa).

[4Fe-4S] cluster is bound at residue Cys12. His41 and His74 together coordinate (2E)-4-hydroxy-3-methylbut-2-enyl diphosphate. Dimethylallyl diphosphate-binding residues include His41 and His74. Residues His41 and His74 each coordinate isopentenyl diphosphate. Cys96 contributes to the [4Fe-4S] cluster binding site. His124 is a binding site for (2E)-4-hydroxy-3-methylbut-2-enyl diphosphate. His124 is a dimethylallyl diphosphate binding site. An isopentenyl diphosphate-binding site is contributed by His124. The active-site Proton donor is Glu126. Residue Thr167 coordinates (2E)-4-hydroxy-3-methylbut-2-enyl diphosphate. A [4Fe-4S] cluster-binding site is contributed by Cys197. (2E)-4-hydroxy-3-methylbut-2-enyl diphosphate is bound by residues Ser225, Ser226, Asn227, and Ser269. Residues Ser225, Ser226, Asn227, and Ser269 each contribute to the dimethylallyl diphosphate site. Residues Ser225, Ser226, Asn227, and Ser269 each coordinate isopentenyl diphosphate.

The protein belongs to the IspH family. [4Fe-4S] cluster is required as a cofactor.

It carries out the reaction isopentenyl diphosphate + 2 oxidized [2Fe-2S]-[ferredoxin] + H2O = (2E)-4-hydroxy-3-methylbut-2-enyl diphosphate + 2 reduced [2Fe-2S]-[ferredoxin] + 2 H(+). It catalyses the reaction dimethylallyl diphosphate + 2 oxidized [2Fe-2S]-[ferredoxin] + H2O = (2E)-4-hydroxy-3-methylbut-2-enyl diphosphate + 2 reduced [2Fe-2S]-[ferredoxin] + 2 H(+). The protein operates within isoprenoid biosynthesis; dimethylallyl diphosphate biosynthesis; dimethylallyl diphosphate from (2E)-4-hydroxy-3-methylbutenyl diphosphate: step 1/1. It functions in the pathway isoprenoid biosynthesis; isopentenyl diphosphate biosynthesis via DXP pathway; isopentenyl diphosphate from 1-deoxy-D-xylulose 5-phosphate: step 6/6. Catalyzes the conversion of 1-hydroxy-2-methyl-2-(E)-butenyl 4-diphosphate (HMBPP) into a mixture of isopentenyl diphosphate (IPP) and dimethylallyl diphosphate (DMAPP). Acts in the terminal step of the DOXP/MEP pathway for isoprenoid precursor biosynthesis. The chain is 4-hydroxy-3-methylbut-2-enyl diphosphate reductase from Glaesserella parasuis serovar 5 (strain SH0165) (Haemophilus parasuis).